The sequence spans 79 residues: Exodeoxyribonuclease 7 small subunit (79 aa).

This sequence belongs to the XseB family. As to quaternary structure, heterooligomer composed of large and small subunits.

It localises to the cytoplasm. It catalyses the reaction Exonucleolytic cleavage in either 5'- to 3'- or 3'- to 5'-direction to yield nucleoside 5'-phosphates.. Bidirectionally degrades single-stranded DNA into large acid-insoluble oligonucleotides, which are then degraded further into small acid-soluble oligonucleotides. This chain is Exodeoxyribonuclease 7 small subunit, found in Haemophilus influenzae (strain PittGG).